The primary structure comprises 297 residues: 33 kDa chaperonin (297 aa).

Disulfide bonds link Cys-232-Cys-234 and Cys-266-Cys-269.

It belongs to the HSP33 family. Post-translationally, under oxidizing conditions two disulfide bonds are formed involving the reactive cysteines. Under reducing conditions zinc is bound to the reactive cysteines and the protein is inactive.

Its subcellular location is the cytoplasm. Functionally, redox regulated molecular chaperone. Protects both thermally unfolding and oxidatively damaged proteins from irreversible aggregation. Plays an important role in the bacterial defense system toward oxidative stress. This Azotobacter vinelandii (strain DJ / ATCC BAA-1303) protein is 33 kDa chaperonin.